Reading from the N-terminus, the 270-residue chain is Putative pyruvate, phosphate dikinase regulatory protein (270 aa).

147–154 lines the ADP pocket; the sequence is GVSRSSKT.

It belongs to the pyruvate, phosphate/water dikinase regulatory protein family. PDRP subfamily.

It carries out the reaction N(tele)-phospho-L-histidyl/L-threonyl-[pyruvate, phosphate dikinase] + ADP = N(tele)-phospho-L-histidyl/O-phospho-L-threonyl-[pyruvate, phosphate dikinase] + AMP + H(+). It catalyses the reaction N(tele)-phospho-L-histidyl/O-phospho-L-threonyl-[pyruvate, phosphate dikinase] + phosphate + H(+) = N(tele)-phospho-L-histidyl/L-threonyl-[pyruvate, phosphate dikinase] + diphosphate. Functionally, bifunctional serine/threonine kinase and phosphorylase involved in the regulation of the pyruvate, phosphate dikinase (PPDK) by catalyzing its phosphorylation/dephosphorylation. The polypeptide is Putative pyruvate, phosphate dikinase regulatory protein (Citrifermentans bemidjiense (strain ATCC BAA-1014 / DSM 16622 / JCM 12645 / Bem) (Geobacter bemidjiensis)).